Here is a 117-residue protein sequence, read N- to C-terminus: Prefoldin subunit beta (117 aa).

It belongs to the prefoldin subunit beta family. Heterohexamer of two alpha and four beta subunits.

The protein resides in the cytoplasm. Molecular chaperone capable of stabilizing a range of proteins. Seems to fulfill an ATP-independent, HSP70-like function in archaeal de novo protein folding. The protein is Prefoldin subunit beta of Thermococcus kodakarensis (strain ATCC BAA-918 / JCM 12380 / KOD1) (Pyrococcus kodakaraensis (strain KOD1)).